The chain runs to 325 residues: Golgi to ER traffic protein 4 homolog B (325 aa).

Disordered stretches follow at residues 1-22 (MAAA…GGVQ) and 306-325 (SGED…IELD). Residues 307–317 (GEDDDVEDGQE) are compositionally biased toward acidic residues.

Belongs to the GET4 family. As to quaternary structure, component of the bag6/bat3 complex.

It is found in the cytoplasm. The protein resides in the cytosol. Functionally, as part of a cytosolic protein quality control complex, the bag6/bat3 complex, maintains misfolded and hydrophobic patches-containing proteins in a soluble state and participates in their proper delivery to the endoplasmic reticulum or alternatively can promote their sorting to the proteasome where they undergo degradation. The bag6/bat3 complex is involved in the post-translational delivery of tail-anchored/type II transmembrane proteins to the endoplasmic reticulum membrane. Similarly, the bag6/bat3 complex also functions as a sorting platform for proteins of the secretory pathway that are mislocalized to the cytosol either delivering them to the proteasome for degradation or to the endoplasmic reticulum. The bag6/bat3 complex also plays a role in the endoplasmic reticulum-associated degradation (ERAD), a quality control mechanism that eliminates unwanted proteins of the endoplasmic reticulum through their retrotranslocation to the cytosol and their targeting to the proteasome. It maintains these retrotranslocated proteins in an unfolded yet soluble state condition in the cytosol to ensure their proper delivery to the proteasome. The sequence is that of Golgi to ER traffic protein 4 homolog B (get4-b) from Xenopus laevis (African clawed frog).